The primary structure comprises 143 residues: MFARILGLDVGTKTVGVSVSDLLGMTAQPVETIKIDSEAGELGFERLGVLIKEYKPEKVVLGLPKHMNGDEGIRAEASRDYGTKLANEFGLEVAYQDERLTTAQAEKVLIDGGVRRKERKKSIDKLAAVLILQNYLDAHALKL.

This sequence belongs to the YqgF nuclease family.

The protein resides in the cytoplasm. In terms of biological role, could be a nuclease involved in processing of the 5'-end of pre-16S rRNA. The chain is Putative pre-16S rRNA nuclease (ybeB) from Lactococcus lactis subsp. lactis (strain IL1403) (Streptococcus lactis).